Here is a 925-residue protein sequence, read N- to C-terminus: Neuronal PAS domain-containing protein 3 (925 aa).

The bHLH domain occupies 58 to 111 (LRKEKSRDAARSRRGKENFEFYELAKLLPLPAAITSQLDKASIIRLTISYLKMR). Positions 60-71 (KEKSRDAARSRR) are DNA-binding. 2 disordered regions span residues 119–138 (PPWN…KGAQ) and 219–257 (LPPG…SPSL). The region spanning 152–222 (EAHLGSHILQ…EQLGMKLPPG (71 aa)) is the PAS 1 domain. The span at 234-256 (AASSASSSSQSETPEPVETTSPS) shows a compositional bias: low complexity. Residues 324 to 394 (PPPTINEVRI…HSHLDLLNKG (71 aa)) form the PAS 2 domain. A PAC domain is found at 398–441 (TKYYRWMQKNGGYIWIQSSATIAINAKNANEKNIIWVNYLLSNP). Disordered regions lie at residues 457–555 (PEKA…FGAL), 576–645 (PCES…SSPH), and 664–774 (NESS…GASN). Basic and acidic residues-rich tracts occupy residues 484–493 (ENSKSDEKGN) and 529–549 (DSRD…KAAE). Residues 601-622 (KHQKRKRRRKRQKGGSASRRRL) show a composition bias toward basic residues. The segment covering 680-690 (NESPYSMTKPP) has biased composition (polar residues). 2 stretches are compositionally biased toward gly residues: residues 700–710 (GQGGSIGGGGA) and 760–771 (GGGAGSGGGGPG).

As to quaternary structure, efficient DNA binding requires dimerization with another bHLH protein. Interacts with ARNT; forms a heterodimer that binds core DNA sequence 5'-[AG]CGTG-3' within the hypoxia response element (HRE) of target gene promoters. In terms of tissue distribution, detected exclusively in adult brain in inhibitory interneurons.

The protein resides in the nucleus. May play a broad role in neurogenesis. May control regulatory pathways relevant to schizophrenia and to psychotic illness. The protein is Neuronal PAS domain-containing protein 3 (Npas3) of Mus musculus (Mouse).